The following is a 491-amino-acid chain: MAKKAILVITDGIGYSSGMEYNAFYNAQKPTYDKLFSNTPHSFIETHGLSVGLPEGQMGNSEVGHMSMGSGRVLYQDLVKISLSLSENRFRDNEAFRELLAKSSRLHLIGLMSDGGVHSHIDHFMGIADIAAKEGKEVFLHLITDGRDVSPTSAKKYLAQVEKHLGANIKIATVSGRFYSMDRDNRWERVQKGYEAIVKAEPKTTLNPSEYIDASYAKNETDEFIEPIAFDGYDGMSDNDSVLMINFRSDRMREITTAIGESNFSSFEKSDIKLHVATITEYDKNFSYPVLFKKDSPKNTLSEVISSAGLRQLHTAETEKYAHVTFFFNGGIDEPYENETRVLIPSPNVRTYDEKPQMSAKEVGEVVLKGMDEAYDFIVVNFANGDMVGHTGNLEAAKIAVNTVDSELGKILQKAKEMDYSVLITSDHGNCEEMRDDDGNILTNHTAGKVWCFVEAEGVSRVEDGGLNNIAPTILKLMGLEIPKEMDHSLV.

D11 and S61 together coordinate Mn(2+). Catalysis depends on S61, which acts as the Phosphoserine intermediate. Substrate is bound by residues H118, 147-148, R177, R183, 248-251, and K320; these read RD and RSDR. Mn(2+) is bound by residues D386, H390, D427, H428, and H445.

This sequence belongs to the BPG-independent phosphoglycerate mutase family. In terms of assembly, monomer. It depends on Mn(2+) as a cofactor.

The catalysed reaction is (2R)-2-phosphoglycerate = (2R)-3-phosphoglycerate. It functions in the pathway carbohydrate degradation; glycolysis; pyruvate from D-glyceraldehyde 3-phosphate: step 3/5. In terms of biological role, catalyzes the interconversion of 2-phosphoglycerate and 3-phosphoglycerate. The protein is 2,3-bisphosphoglycerate-independent phosphoglycerate mutase of Sulfurimonas denitrificans (strain ATCC 33889 / DSM 1251) (Thiomicrospira denitrificans (strain ATCC 33889 / DSM 1251)).